Consider the following 568-residue polypeptide: 2-succinyl-5-enolpyruvyl-6-hydroxy-3-cyclohexene-1-carboxylate synthase (568 aa).

It belongs to the TPP enzyme family. MenD subfamily. As to quaternary structure, homodimer. Mg(2+) serves as cofactor. The cofactor is Mn(2+). Thiamine diphosphate is required as a cofactor.

It carries out the reaction isochorismate + 2-oxoglutarate + H(+) = 5-enolpyruvoyl-6-hydroxy-2-succinyl-cyclohex-3-ene-1-carboxylate + CO2. It functions in the pathway quinol/quinone metabolism; 1,4-dihydroxy-2-naphthoate biosynthesis; 1,4-dihydroxy-2-naphthoate from chorismate: step 2/7. The protein operates within quinol/quinone metabolism; menaquinone biosynthesis. In terms of biological role, catalyzes the thiamine diphosphate-dependent decarboxylation of 2-oxoglutarate and the subsequent addition of the resulting succinic semialdehyde-thiamine pyrophosphate anion to isochorismate to yield 2-succinyl-5-enolpyruvyl-6-hydroxy-3-cyclohexene-1-carboxylate (SEPHCHC). This Haemophilus influenzae (strain PittGG) protein is 2-succinyl-5-enolpyruvyl-6-hydroxy-3-cyclohexene-1-carboxylate synthase.